A 241-amino-acid polypeptide reads, in one-letter code: 1-(5-phosphoribosyl)-5-[(5-phosphoribosylamino)methylideneamino] imidazole-4-carboxamide isomerase (241 aa).

The active-site Proton acceptor is the D10. D131 serves as the catalytic Proton donor.

This sequence belongs to the HisA/HisF family.

Its subcellular location is the cytoplasm. The enzyme catalyses 1-(5-phospho-beta-D-ribosyl)-5-[(5-phospho-beta-D-ribosylamino)methylideneamino]imidazole-4-carboxamide = 5-[(5-phospho-1-deoxy-D-ribulos-1-ylimino)methylamino]-1-(5-phospho-beta-D-ribosyl)imidazole-4-carboxamide. It participates in amino-acid biosynthesis; L-histidine biosynthesis; L-histidine from 5-phospho-alpha-D-ribose 1-diphosphate: step 4/9. The chain is 1-(5-phosphoribosyl)-5-[(5-phosphoribosylamino)methylideneamino] imidazole-4-carboxamide isomerase from Bifidobacterium longum (strain NCC 2705).